A 193-amino-acid polypeptide reads, in one-letter code: Ion-translocating oxidoreductase complex subunit A (193 aa).

6 consecutive transmembrane segments (helical) span residues 4–24 (FLLV…KFLG), 39–59 (IGMG…CWLV), 71–91 (FLRI…IETV), 102–122 (ALGI…LPLM), 134–154 (TLSG…FAGM), and 171–191 (PIAF…AGLV).

Belongs to the NqrDE/RnfAE family. The complex is composed of six subunits: RnfA, RnfB, RnfC, RnfD, RnfE and RnfG.

The protein localises to the cellular chromatophore membrane. Functionally, part of a membrane-bound complex that couples electron transfer with translocation of ions across the membrane. Required for nitrogen fixation. Involved in electron transfer to nitrogenase. The polypeptide is Ion-translocating oxidoreductase complex subunit A (Rhodobacter capsulatus (Rhodopseudomonas capsulata)).